The sequence spans 512 residues: Sporulation-regulated protein 3 (512 aa).

The segment at 31–68 (RQSSQGQYAVDSHPPKSPELKHRRQRSSSFVNGKCRNR) is disordered. The 260-residue stretch at 106–365 (NGIDFTLMVA…EKCRSEMLRT (260 aa)) folds into the Septin-type G domain. The G1 motif stretch occupies residues 116–123 (GQSGLGKT). Residues 116-123 (GQSGLGKT), Gly-168, 247-255 (KSDLLTKEE), and Arg-315 contribute to the GTP site. A G3 motif region spans residues 165-168 (DTPG). Residues 246–249 (AKSD) are G4 motif. 2 coiled-coil regions span residues 376–406 (TKSV…LKNY) and 451–496 (RDWK…KSSN).

The protein belongs to the TRAFAC class TrmE-Era-EngA-EngB-Septin-like GTPase superfamily. Septin GTPase family. Interacts with other septin proteins such as SPR28 to form a ring at the bud neck.

It localises to the prospore membrane. Its subcellular location is the bud neck. Its function is as follows. Septins are GTPases involved in cytokinesis that assemble into filaments and form a ring at the cleavage site. May act by recruiting MYO1 and HOF1, a protein involved in septation, to the site of cleavage. Septins are also involved in cell morphogenesis, bud site selection, chitin deposition, cell cycle regulation, cell compartmentalization and spore wall formation. The polypeptide is Sporulation-regulated protein 3 (SPR3) (Saccharomyces cerevisiae (strain ATCC 204508 / S288c) (Baker's yeast)).